Reading from the N-terminus, the 421-residue chain is Isocitrate dehydrogenase [NADP], mitochondrial (421 aa).

The transit peptide at 1-8 (ARAAARHY) directs the protein to the mitochondrion. Residues K14, K17, K36, and K38 each carry the N6-acetyllysine modification. An N6-acetyllysine; alternate mark is found at K49 and K75. 2 positions are modified to N6-succinyllysine; alternate: K49 and K75. NADP(+) contacts are provided by residues 84–86 (TIT) and R91. T86 is a D-threo-isocitrate binding site. D-threo-isocitrate contacts are provided by residues 103 to 109 (SPNGTIR) and R118. At K124 the chain carries N6-acetyllysine. K135 bears the N6-acetyllysine; alternate mark. N6-succinyllysine; alternate is present on K135. A D-threo-isocitrate-binding site is contributed by R141. An N6-acetyllysine; alternate mark is found at K149 and K162. An N6-succinyllysine; alternate mark is found at K149 and K162. Residue K168 is modified to N6-acetyllysine. K225 bears the N6-acetyllysine; alternate mark. K225 carries the post-translational modification N6-succinyllysine; alternate. N6-acetyllysine occurs at positions 232, 241, 244, and 249. An N6-acetyllysine; alternate modification is found at K251. Position 251 is an N6-succinyllysine; alternate (K251). Mn(2+) is bound at residue D260. K268 contacts NADP(+). Position 283 (D283) interacts with Mn(2+). Residues 318-323 (GTVTRH) and N336 contribute to the NADP(+) site. The residue at position 353 (K353) is an N6-acetyllysine; alternate. K353 is modified (N6-succinyllysine; alternate). N6-acetyllysine occurs at positions 369, 382, and 411.

It belongs to the isocitrate and isopropylmalate dehydrogenases family. Homodimer. Mg(2+) serves as cofactor. The cofactor is Mn(2+). Post-translationally, acetylation at Lys-382 dramatically reduces catalytic activity. Deacetylated by SIRT3.

Its subcellular location is the mitochondrion. It carries out the reaction D-threo-isocitrate + NADP(+) = 2-oxoglutarate + CO2 + NADPH. Plays a role in intermediary metabolism and energy production. It may tightly associate or interact with the pyruvate dehydrogenase complex. The protein is Isocitrate dehydrogenase [NADP], mitochondrial (IDH2) of Sus scrofa (Pig).